Reading from the N-terminus, the 106-residue chain is Iron-sulfur cluster assembly protein CyaY (106 aa).

This sequence belongs to the frataxin family.

Involved in iron-sulfur (Fe-S) cluster assembly. May act as a regulator of Fe-S biogenesis. The protein is Iron-sulfur cluster assembly protein CyaY of Citrobacter koseri (strain ATCC BAA-895 / CDC 4225-83 / SGSC4696).